We begin with the raw amino-acid sequence, 554 residues long: Glucose-6-phosphate isomerase (554 aa).

Glu359 functions as the Proton donor in the catalytic mechanism. Active-site residues include His390 and Lys518.

It belongs to the GPI family.

The protein localises to the cytoplasm. The catalysed reaction is alpha-D-glucose 6-phosphate = beta-D-fructose 6-phosphate. Its pathway is carbohydrate biosynthesis; gluconeogenesis. It functions in the pathway carbohydrate degradation; glycolysis; D-glyceraldehyde 3-phosphate and glycerone phosphate from D-glucose: step 2/4. Its function is as follows. Catalyzes the reversible isomerization of glucose-6-phosphate to fructose-6-phosphate. In Pseudomonas putida (strain ATCC 700007 / DSM 6899 / JCM 31910 / BCRC 17059 / LMG 24140 / F1), this protein is Glucose-6-phosphate isomerase.